The primary structure comprises 367 residues: Apolipoprotein A-V (367 aa).

The N-terminal stretch at Met1 to Thr20 is a signal peptide. Position 56 is a phosphoserine (Ser56).

This sequence belongs to the apolipoprotein A1/A4/E family. In terms of assembly, interacts with GPIHBP1. Interacts with SORL1; this interaction leads to APOA5 internalization and sorting either to lysosomes and degradation, or to the trans-Golgi network. In terms of processing, phosphorylated by FAM20C in the extracellular medium.

It localises to the secreted. The protein localises to the early endosome. It is found in the late endosome. The protein resides in the golgi apparatus. Its subcellular location is the trans-Golgi network. Functionally, minor apolipoprotein mainly associated with HDL and to a lesser extent with VLDL. May also be associated with chylomicrons. Important determinant of plasma triglyceride (TG) levels by both being a potent stimulator of apo-CII lipoprotein lipase (LPL) TG hydrolysis and an inhibitor of the hepatic VLDL-TG production rate (without affecting the VLDL-apoB production rate). Activates poorly lecithin:cholesterol acyltransferase (LCAT) and does not enhance efflux of cholesterol from macrophages. Binds heparin. This Phoca vitulina (Harbor seal) protein is Apolipoprotein A-V (APOA5).